Consider the following 458-residue polypeptide: Argininosuccinate lyase (458 aa).

It belongs to the lyase 1 family. Argininosuccinate lyase subfamily.

The protein localises to the cytoplasm. It catalyses the reaction 2-(N(omega)-L-arginino)succinate = fumarate + L-arginine. The protein operates within amino-acid biosynthesis; L-arginine biosynthesis; L-arginine from L-ornithine and carbamoyl phosphate: step 3/3. This chain is Argininosuccinate lyase, found in Salmonella schwarzengrund (strain CVM19633).